Consider the following 299-residue polypeptide: Delta-9 desaturase-like 2 protein (299 aa).

The chain crosses the membrane as a helical span at residues W55–S75. The Histidine box-1 signature appears at H77 to H82. The Histidine box-2 signature appears at H114 to H118. The chain crosses the membrane as a helical span at residues L174–L194. The Histidine box-3 signature appears at H246–H250. A helical transmembrane segment spans residues W262 to T282.

The protein belongs to the fatty acid desaturase type 1 family. Fe cation is required as a cofactor.

Its subcellular location is the endoplasmic reticulum membrane. It functions in the pathway lipid metabolism; polyunsaturated fatty acid biosynthesis. The polypeptide is Delta-9 desaturase-like 2 protein (Arabidopsis thaliana (Mouse-ear cress)).